A 505-amino-acid polypeptide reads, in one-letter code: ATP synthase subunit beta (505 aa).

Residue 158-165 (GGAGVGKT) coordinates ATP.

This sequence belongs to the ATPase alpha/beta chains family. F-type ATPases have 2 components, CF(1) - the catalytic core - and CF(0) - the membrane proton channel. CF(1) has five subunits: alpha(3), beta(3), gamma(1), delta(1), epsilon(1). CF(0) has three main subunits: a(1), b(2) and c(9-12). The alpha and beta chains form an alternating ring which encloses part of the gamma chain. CF(1) is attached to CF(0) by a central stalk formed by the gamma and epsilon chains, while a peripheral stalk is formed by the delta and b chains.

The protein localises to the cell inner membrane. The enzyme catalyses ATP + H2O + 4 H(+)(in) = ADP + phosphate + 5 H(+)(out). Functionally, produces ATP from ADP in the presence of a proton gradient across the membrane. The catalytic sites are hosted primarily by the beta subunits. This is ATP synthase subunit beta from Parabacteroides distasonis (strain ATCC 8503 / DSM 20701 / CIP 104284 / JCM 5825 / NCTC 11152).